Here is a 561-residue protein sequence, read N- to C-terminus: Putative transport protein YbjL (561 aa).

5 helical membrane-spanning segments follow: residues 8 to 28 (LLNG…LCLG), 32 to 52 (LGSI…LLGQ), 66 to 86 (FMLF…SIFF), 94 to 114 (MLAL…GKLF), and 158 to 178 (NLSL…IVGA). 2 consecutive RCK C-terminal domains span residues 200–288 (RGLD…SFRN) and 292–373 (VFDR…RIGF). The next 5 helical transmembrane spans lie at 383–403 (LLAF…TFQF), 406–426 (FSFG…LGFM), 451–471 (VFMA…LGAI), 475–495 (MLIA…LFGA), and 540–560 (AIAN…WPGL).

This sequence belongs to the AAE transporter (TC 2.A.81) family. YbjL subfamily.

Its subcellular location is the cell membrane. The chain is Putative transport protein YbjL from Escherichia coli O127:H6 (strain E2348/69 / EPEC).